A 161-amino-acid chain; its full sequence is Allophycocyanin beta chain (161 aa).

N71 carries the post-translational modification N4-methylasparagine. C81 lines the (2R,3E)-phycocyanobilin pocket.

It belongs to the phycobiliprotein family. In terms of assembly, heterodimer of an alpha and a beta chain. Post-translationally, contains one covalently linked phycocyanobilin chromophore.

The protein localises to the cellular thylakoid membrane. Light-harvesting photosynthetic bile pigment-protein from the phycobiliprotein complex. Allophycocyanin has a maximum absorption at approximately 650 nanometers. This is Allophycocyanin beta chain (apcB) from Synechocystis sp. (strain PCC 6714) (Aphanocapsa sp. (strain PCC 6714)).